A 185-amino-acid chain; its full sequence is MQTIRKSLGLVLIMFVLCGFIFPLTVTALGQVLFPEQANGSLVKQDGKVIGSKLIGQQWTEPKYFHGRISAVNYNMNANEVKESGGPASGGSNYGNSNPELKKRVQETIKQEGQKLSSDAVTTSGSGLDPDITVDNAKQQVKCIAKERNIDASKINHLIDENKQASPMADDYVNVLKLNITLDKL.

A helical transmembrane segment spans residues 8–28; it reads LGLVLIMFVLCGFIFPLTVTA. The segment at 113-132 is disordered; sequence GQKLSSDAVTTSGSGLDPDI. The segment covering 114 to 126 has biased composition (polar residues); it reads QKLSSDAVTTSGS.

The protein belongs to the KdpC family. In terms of assembly, the system is composed of three essential subunits: KdpA, KdpB and KdpC.

The protein resides in the cell membrane. Functionally, part of the high-affinity ATP-driven potassium transport (or Kdp) system, which catalyzes the hydrolysis of ATP coupled with the electrogenic transport of potassium into the cytoplasm. This subunit acts as a catalytic chaperone that increases the ATP-binding affinity of the ATP-hydrolyzing subunit KdpB by the formation of a transient KdpB/KdpC/ATP ternary complex. This is Potassium-transporting ATPase KdpC subunit from Staphylococcus haemolyticus (strain JCSC1435).